Here is a 185-residue protein sequence, read N- to C-terminus: Ribosome-recycling factor (185 aa).

It belongs to the RRF family.

It is found in the cytoplasm. Its function is as follows. Responsible for the release of ribosomes from messenger RNA at the termination of protein biosynthesis. May increase the efficiency of translation by recycling ribosomes from one round of translation to another. The sequence is that of Ribosome-recycling factor from Aromatoleum aromaticum (strain DSM 19018 / LMG 30748 / EbN1) (Azoarcus sp. (strain EbN1)).